We begin with the raw amino-acid sequence, 126 residues long: DNA-directed RNA polymerase subunit omega (126 aa).

This sequence belongs to the RNA polymerase subunit omega family. The RNAP catalytic core consists of 2 alpha, 1 beta, 1 beta' and 1 omega subunit. When a sigma factor is associated with the core the holoenzyme is formed, which can initiate transcription.

It carries out the reaction RNA(n) + a ribonucleoside 5'-triphosphate = RNA(n+1) + diphosphate. Its function is as follows. Promotes RNA polymerase assembly. Latches the N- and C-terminal regions of the beta' subunit thereby facilitating its interaction with the beta and alpha subunits. In Rickettsia bellii (strain OSU 85-389), this protein is DNA-directed RNA polymerase subunit omega.